Reading from the N-terminus, the 234-residue chain is S-adenosylmethionine synthase 1 (234 aa).

ATP contacts are provided by residues 10–12 (DGK), 78–81 (SGRF), aspartate 89, 95–96 (RK), alanine 112, lysine 116, and lysine 120. Aspartate 89 serves as a coordination point for L-methionine. Residue lysine 120 participates in L-methionine binding.

It belongs to the AdoMet synthase family. In terms of assembly, homotetramer. Requires Mn(2+) as cofactor. The cofactor is Mg(2+). Co(2+) serves as cofactor. It depends on K(+) as a cofactor. As to expression, mainly in floral buds and roots.

The protein resides in the cytoplasm. It catalyses the reaction L-methionine + ATP + H2O = S-adenosyl-L-methionine + phosphate + diphosphate. It functions in the pathway amino-acid biosynthesis; S-adenosyl-L-methionine biosynthesis; S-adenosyl-L-methionine from L-methionine: step 1/1. Its function is as follows. Catalyzes the formation of S-adenosylmethionine from methionine and ATP. The reaction comprises two steps that are both catalyzed by the same enzyme: formation of S-adenosylmethionine (AdoMet) and triphosphate, and subsequent hydrolysis of the triphosphate. The polypeptide is S-adenosylmethionine synthase 1 (SMS-1) (Petroselinum crispum (Parsley)).